Here is a 357-residue protein sequence, read N- to C-terminus: Non-structural protein NS2 (357 aa).

2 disordered regions span residues 162–199 and 228–268; these read QNERESAPRLQVQSVSPREESRWMDDDEAKVDEEAKEM and LDEK…KTHI. 2 stretches are compositionally biased toward acidic residues: residues 230–243 and 250–260; these read EKDEEDRDEREDEE and DDDEQGEDASD.

The protein belongs to the orbivirus non-structural protein NS2 family.

Its function is as follows. Single-stranded RNA-binding protein. In Antilocapra americana (Pronghorn), this protein is Non-structural protein NS2 (Segment-8).